The primary structure comprises 1387 residues: DNA-directed RNA polymerase subunit beta (1387 aa).

Belongs to the RNA polymerase beta chain family. In terms of assembly, the RNAP catalytic core consists of 2 alpha, 1 beta, 1 beta' and 1 omega subunit. When a sigma factor is associated with the core the holoenzyme is formed, which can initiate transcription.

The enzyme catalyses RNA(n) + a ribonucleoside 5'-triphosphate = RNA(n+1) + diphosphate. DNA-dependent RNA polymerase catalyzes the transcription of DNA into RNA using the four ribonucleoside triphosphates as substrates. This chain is DNA-directed RNA polymerase subunit beta, found in Xanthomonas campestris pv. campestris (strain 8004).